Reading from the N-terminus, the 137-residue chain is Altered inheritance of mitochondria protein 11 (137 aa).

2 consecutive transmembrane segments (helical) span residues 20–37 and 66–88; these read YGAAAFTLITMRLISRAI and LTYASAASIGTFSTLIFGFCWAL.

It belongs to the AIM11 family.

It is found in the membrane. This Saccharomyces cerevisiae (strain RM11-1a) (Baker's yeast) protein is Altered inheritance of mitochondria protein 11 (AIM11).